Reading from the N-terminus, the 431-residue chain is Glucose-1-phosphate adenylyltransferase (431 aa).

Alpha-D-glucose 1-phosphate contacts are provided by residues G163, 178–179, and S210; that span reads EK.

The protein belongs to the bacterial/plant glucose-1-phosphate adenylyltransferase family. In terms of assembly, homotetramer.

The enzyme catalyses alpha-D-glucose 1-phosphate + ATP + H(+) = ADP-alpha-D-glucose + diphosphate. Its pathway is glycan biosynthesis; glycogen biosynthesis. In terms of biological role, involved in the biosynthesis of ADP-glucose, a building block required for the elongation reactions to produce glycogen. Catalyzes the reaction between ATP and alpha-D-glucose 1-phosphate (G1P) to produce pyrophosphate and ADP-Glc. This Synechococcus sp. (strain WH7803) protein is Glucose-1-phosphate adenylyltransferase.